Reading from the N-terminus, the 113-residue chain is Tubulin alpha chain (113 aa).

Residue Glu-52 coordinates GTP. Residue Glu-52 participates in Mg(2+) binding.

It belongs to the tubulin family. As to quaternary structure, dimer of alpha and beta chains. A typical microtubule is a hollow water-filled tube with an outer diameter of 25 nm and an inner diameter of 15 nM. Alpha-beta heterodimers associate head-to-tail to form protofilaments running lengthwise along the microtubule wall with the beta-tubulin subunit facing the microtubule plus end conferring a structural polarity. Microtubules usually have 13 protofilaments but different protofilament numbers can be found in some organisms and specialized cells. The cofactor is Mg(2+).

It localises to the cytoplasm. The protein resides in the cytoskeleton. The enzyme catalyses GTP + H2O = GDP + phosphate + H(+). Tubulin is the major constituent of microtubules, a cylinder consisting of laterally associated linear protofilaments composed of alpha- and beta-tubulin heterodimers. Microtubules grow by the addition of GTP-tubulin dimers to the microtubule end, where a stabilizing cap forms. Below the cap, tubulin dimers are in GDP-bound state, owing to GTPase activity of alpha-tubulin. The chain is Tubulin alpha chain (TUBA) from Picea abies (Norway spruce).